The chain runs to 681 residues: PTS system glucose-specific EIICBA component (681 aa).

The region spanning 3–414 (KKLFGQLQRI…LKYKTPGRED (412 aa)) is the PTS EIIC type-1 domain. The next 10 membrane-spanning stretches (helical) occupy residues 16–36 (LMLP…GTAM), 73–93 (MIFA…AAIA), 126–146 (ILGI…GALA), 170–190 (FVPI…ALIW), 199–219 (AFST…FGFI), 273–293 (FMQG…LAIY), 303–323 (VVAG…ITEP), 328–348 (FLFV…LSFL), 355–375 (LHLG…GILP), and 383–403 (VIPV…FLIV). Residues 425–506 (TELPYAVLEA…QQIMNGQVVE (82 aa)) form the PTS EIIB type-1 domain. Cysteine 447 acts as the Phosphocysteine intermediate; for EIIB activity in catalysis. One can recognise a PTS EIIA type-1 domain in the interval 551-655 (DQVFSEKMMG…SDITPIIVTQ (105 aa)). Catalysis depends on histidine 603, which acts as the Tele-phosphohistidine intermediate; for EIIA activity.

It localises to the cell membrane. It catalyses the reaction N(pros)-phospho-L-histidyl-[protein] + D-glucose(out) = D-glucose 6-phosphate(in) + L-histidyl-[protein]. In terms of biological role, the phosphoenolpyruvate-dependent sugar phosphotransferase system (sugar PTS), a major carbohydrate active transport system, catalyzes the phosphorylation of incoming sugar substrates concomitantly with their translocation across the cell membrane. This system is involved in glucose transport. This Staphylococcus aureus (strain NCTC 8325 / PS 47) protein is PTS system glucose-specific EIICBA component (ptsG).